The chain runs to 317 residues: tRNA pseudouridine synthase B (317 aa).

Asp47 serves as the catalytic Nucleophile.

Belongs to the pseudouridine synthase TruB family. Type 1 subfamily.

It carries out the reaction uridine(55) in tRNA = pseudouridine(55) in tRNA. In terms of biological role, responsible for synthesis of pseudouridine from uracil-55 in the psi GC loop of transfer RNAs. The polypeptide is tRNA pseudouridine synthase B (Shewanella denitrificans (strain OS217 / ATCC BAA-1090 / DSM 15013)).